The following is a 369-amino-acid chain: Beta-1,3-galactosyltransferase 9 (369 aa).

Over 1 to 12 the chain is Cytoplasmic; that stretch reads MQVTFCRLRTHQ. The chain crosses the membrane as a helical; Signal-anchor for type II membrane protein span at residues 13 to 33; sequence WCFILFNVILFHALLFGTDFV. The Lumenal segment spans residues 34 to 369; the sequence is EEYFLHSLPY…IKNNLMYFAD (336 aa). 3 N-linked (GlcNAc...) asparagine glycosylation sites follow: Asn-66, Asn-96, and Asn-109.

Belongs to the glycosyltransferase 31 family.

The protein resides in the golgi apparatus membrane. Functionally, putative glycosyltransferase that could catalyze the transfer of galactose residues from UDP-alpha-D-galactose. The chain is Beta-1,3-galactosyltransferase 9 from Homo sapiens (Human).